A 158-amino-acid polypeptide reads, in one-letter code: Ribosomal RNA large subunit methyltransferase H (158 aa).

Residues Leu-72, Gly-103, and 122–127 each bind S-adenosyl-L-methionine; that span reads LGNLTL.

The protein belongs to the RNA methyltransferase RlmH family. As to quaternary structure, homodimer.

Its subcellular location is the cytoplasm. The enzyme catalyses pseudouridine(1915) in 23S rRNA + S-adenosyl-L-methionine = N(3)-methylpseudouridine(1915) in 23S rRNA + S-adenosyl-L-homocysteine + H(+). In terms of biological role, specifically methylates the pseudouridine at position 1915 (m3Psi1915) in 23S rRNA. The polypeptide is Ribosomal RNA large subunit methyltransferase H (Acidiphilium cryptum (strain JF-5)).